The primary structure comprises 88 residues: Protein MATERNALLY EXPRESSED GENE 1 (88 aa).

The first 27 residues, 1–27, serve as a signal peptide directing secretion; sequence MEYKKRVDALVFFSLLLLGYFAAHAHG. A glycan (N-linked (GlcNAc...) asparagine) is linked at asparagine 36. 2 disulfide bridges follow: cysteine 65/cysteine 87 and cysteine 68/cysteine 76.

The protein belongs to the MEG family. Glycosylated. In terms of tissue distribution, expressed exclusively in endosperm. Found in basal endosperm transfer cells.

Its subcellular location is the secreted. The protein localises to the cell wall. It localises to the cell membrane. The protein resides in the extracellular space. It is found in the extracellular matrix. In terms of biological role, regulates maternal nutrient uptake, sucrose partitioning, and seed biomass yield. Necessary and sufficient for the establishment and differentiation of the endosperm nutrient transfer cells located at the mother:seed interface. Exclusive expression of the maternal allele at the early stages of endosperm development. The maternal allele is hypomethylated. At later stages, expression becomes biallelic. Regulated by the transcription factor MRP1. In Zea mays (Maize), this protein is Protein MATERNALLY EXPRESSED GENE 1 (MEG1).